A 101-amino-acid polypeptide reads, in one-letter code: Large ribosomal subunit protein uL23 (101 aa).

It belongs to the universal ribosomal protein uL23 family. As to quaternary structure, part of the 50S ribosomal subunit. Contacts protein L29, and trigger factor when it is bound to the ribosome.

Its function is as follows. One of the early assembly proteins it binds 23S rRNA. One of the proteins that surrounds the polypeptide exit tunnel on the outside of the ribosome. Forms the main docking site for trigger factor binding to the ribosome. This chain is Large ribosomal subunit protein uL23, found in Leptospira biflexa serovar Patoc (strain Patoc 1 / Ames).